We begin with the raw amino-acid sequence, 421 residues long: Tyrosine--tRNA ligase (421 aa).

Tyrosine 38 provides a ligand contact to L-tyrosine. The short motif at proline 43–histidine 52 is the 'HIGH' region element. L-tyrosine is bound by residues tyrosine 169 and glutamine 173. Positions lysine 231–serine 235 match the 'KMSKS' region motif. Lysine 234 contacts ATP. An S4 RNA-binding domain is found at lysine 353–isoleucine 419.

Belongs to the class-I aminoacyl-tRNA synthetase family. TyrS type 1 subfamily. As to quaternary structure, homodimer.

The protein localises to the cytoplasm. The enzyme catalyses tRNA(Tyr) + L-tyrosine + ATP = L-tyrosyl-tRNA(Tyr) + AMP + diphosphate + H(+). Its function is as follows. Catalyzes the attachment of tyrosine to tRNA(Tyr) in a two-step reaction: tyrosine is first activated by ATP to form Tyr-AMP and then transferred to the acceptor end of tRNA(Tyr). This is Tyrosine--tRNA ligase from Lactobacillus delbrueckii subsp. bulgaricus (strain ATCC 11842 / DSM 20081 / BCRC 10696 / JCM 1002 / NBRC 13953 / NCIMB 11778 / NCTC 12712 / WDCM 00102 / Lb 14).